The following is a 118-amino-acid chain: Large ribosomal subunit protein bL19 (118 aa).

It belongs to the bacterial ribosomal protein bL19 family.

Its function is as follows. This protein is located at the 30S-50S ribosomal subunit interface and may play a role in the structure and function of the aminoacyl-tRNA binding site. In Hahella chejuensis (strain KCTC 2396), this protein is Large ribosomal subunit protein bL19.